The primary structure comprises 882 residues: Lon protease homolog, mitochondrial (882 aa).

The N-terminal 34 residues, 1–34 (MIHVLKSRSTLLTASSIVRTSVGSSSRYSQTRTY), are a transit peptide targeting the mitochondrion. One can recognise a Lon N-terminal domain in the interval 68 to 281 (TLGLPLVSRP…KALVLLNRER (214 aa)). 435–442 (GPPGTGKT) is a binding site for ATP. The region spanning 687 to 878 (PLPHGIVMGL…DKVYEVAFSS (192 aa)) is the Lon proteolytic domain. Residues S784 and K827 contribute to the active site.

This sequence belongs to the peptidase S16 family. In terms of assembly, homohexamer or homoheptamer. Organized in a ring with a central cavity.

Its subcellular location is the mitochondrion matrix. It carries out the reaction Hydrolysis of proteins in presence of ATP.. Its function is as follows. ATP-dependent serine protease that mediates the selective degradation of misfolded, unassembled or oxidatively damaged polypeptides as well as certain short-lived regulatory proteins in the mitochondrial matrix. May also have a chaperone function in the assembly of inner membrane protein complexes. Participates in the regulation of mitochondrial gene expression and in the maintenance of the integrity of the mitochondrial genome. Binds to mitochondrial DNA in a site-specific manner. The chain is Lon protease homolog, mitochondrial from Phaeodactylum tricornutum (strain CCAP 1055/1).